The sequence spans 596 residues: NADH-quinone oxidoreductase subunit C/D (596 aa).

An NADH dehydrogenase I subunit C region spans residues 1 to 186 (MMNDNKYIHI…PAFTLTRKKE (186 aa)). Positions 210 to 596 (DFMFLNLGPN…IDFVMSDVDR (387 aa)) are NADH dehydrogenase I subunit D.

This sequence in the N-terminal section; belongs to the complex I 30 kDa subunit family. The protein in the C-terminal section; belongs to the complex I 49 kDa subunit family. NDH-1 is composed of 13 different subunits. Subunits NuoB, CD, E, F, and G constitute the peripheral sector of the complex.

The protein resides in the cell inner membrane. The enzyme catalyses a quinone + NADH + 5 H(+)(in) = a quinol + NAD(+) + 4 H(+)(out). In terms of biological role, NDH-1 shuttles electrons from NADH, via FMN and iron-sulfur (Fe-S) centers, to quinones in the respiratory chain. The immediate electron acceptor for the enzyme in this species is believed to be ubiquinone. Couples the redox reaction to proton translocation (for every two electrons transferred, four hydrogen ions are translocated across the cytoplasmic membrane), and thus conserves the redox energy in a proton gradient. The protein is NADH-quinone oxidoreductase subunit C/D of Blochmanniella floridana.